The following is a 347-amino-acid chain: D-fructose 1,6-bisphosphatase class 2/sedoheptulose 1,7-bisphosphatase (347 aa).

Residues Asp33, Glu57, Asp97, and Glu100 each coordinate Mn(2+). Residues Glu100–Thr102, Tyr131, Arg176–Arg178, and Asp198–Asp200 each bind substrate. Mn(2+) is bound at residue Glu225.

The protein belongs to the FBPase class 2 family. In terms of assembly, homotetramer. Mn(2+) is required as a cofactor.

The catalysed reaction is beta-D-fructose 1,6-bisphosphate + H2O = beta-D-fructose 6-phosphate + phosphate. It catalyses the reaction D-sedoheptulose 1,7-bisphosphate + H2O = D-sedoheptulose 7-phosphate + phosphate. It participates in carbohydrate biosynthesis; Calvin cycle. Functionally, catalyzes the hydrolysis of fructose 1,6-bisphosphate (Fru 1,6-P2) and sedoheptulose 1,7-bisphosphate (Sed 1,7-P2) to fructose 6-phosphate and sedoheptulose 7-phosphate, respectively. The polypeptide is D-fructose 1,6-bisphosphatase class 2/sedoheptulose 1,7-bisphosphatase (Synechococcus sp. (strain JA-3-3Ab) (Cyanobacteria bacterium Yellowstone A-Prime)).